A 140-amino-acid chain; its full sequence is Small ribosomal subunit protein uS19 (140 aa).

The protein belongs to the universal ribosomal protein uS19 family.

Functionally, protein S19 forms a complex with S13 that binds strongly to the 16S ribosomal RNA. This chain is Small ribosomal subunit protein uS19, found in Methanocella arvoryzae (strain DSM 22066 / NBRC 105507 / MRE50).